Here is an 877-residue protein sequence, read N- to C-terminus: Mediator of RNA polymerase II transcription subunit 16 (877 aa).

WD repeat units lie at residues 21–71 (WEKW…EHPW), 72–119 (DLHS…NSWE), 120–165 (SSVG…VKFS), 166–203 (PSLT…LTST), 204–257 (ESLC…RIDT), 258–334 (EILP…DKQP), 335–415 (TILK…RPVD), 416–460 (EPAM…LSPS), and 461–495 (MGHP…LLHV). The interval 848 to 877 (PAFVQLGPQSTHHSPRTPRSLDHLHPEDRP) is disordered. Positions 866 to 877 (RSLDHLHPEDRP) are enriched in basic and acidic residues.

The protein belongs to the Mediator complex subunit 16 family. Component of the Mediator complex, which is composed of MED1, MED4, MED6, MED7, MED8, MED9, MED10, MED11, MED12, MED13, MED13L, MED14, MED15, MED16, MED17, MED18, MED19, MED20, MED21, MED22, MED23, MED24, MED25, MED26, MED27, MED29, MED30, MED31, CCNC, CDK8 and CDC2L6/CDK11. The MED12, MED13, CCNC and CDK8 subunits form a distinct module termed the CDK8 module. Mediator containing the CDK8 module is less active than Mediator lacking this module in supporting transcriptional activation. Individual preparations of the Mediator complex lacking one or more distinct subunits have been variously termed ARC, CRSP, DRIP, PC2, SMCC and TRAP.

The protein localises to the nucleus. Functionally, component of the Mediator complex, a coactivator involved in the regulated transcription of nearly all RNA polymerase II-dependent genes. Mediator functions as a bridge to convey information from gene-specific regulatory proteins to the basal RNA polymerase II transcription machinery. Mediator is recruited to promoters by direct interactions with regulatory proteins and serves as a scaffold for the assembly of a functional preinitiation complex with RNA polymerase II and the general transcription factors. The chain is Mediator of RNA polymerase II transcription subunit 16 (MED16) from Homo sapiens (Human).